Reading from the N-terminus, the 60-residue chain is U-scutigerotoxin(02)-Tl4a (60 aa).

It belongs to the scutigerotoxin-02 family. Contains 3 disulfide bonds. Expressed by the venom gland.

It is found in the secreted. This chain is U-scutigerotoxin(02)-Tl4a, found in Thereuopoda longicornis (Long-legged centipede).